A 156-amino-acid polypeptide reads, in one-letter code: Rhombotin-1 (156 aa).

2 LIM zinc-binding domains span residues 22–84 (KGCA…LFGT) and 86–148 (GNCA…GQLN).

Its subcellular location is the nucleus. Its function is as follows. May be involved in gene regulation within neural lineage cells potentially by direct DNA binding or by binding to other transcription factors. The protein is Rhombotin-1 of Xenopus laevis (African clawed frog).